We begin with the raw amino-acid sequence, 78 residues long: Beta-defensin 105A (78 aa).

The N-terminal stretch at 1-27 is a signal peptide; the sequence is MALIRKTFYFVFAVFFILVQQPSGCQA. 3 disulfides stabilise this stretch: Cys-43/Cys-74, Cys-53/Cys-67, and Cys-57/Cys-73.

The protein belongs to the beta-defensin family.

It is found in the secreted. Functionally, has antimicrobial activity. This chain is Beta-defensin 105A (DEFB105A), found in Macaca fascicularis (Crab-eating macaque).